Here is a 264-residue protein sequence, read N- to C-terminus: MAATAAALAVTDELALPLRAVGDLAAAAGFSREEVVVITQCASLGGKLPFDDASVGSVLAVIKKVENLGDLFITEISRVLKAGGMVLIQSSPSDQDPNNSIQRKLLLGGFVDVQASAASSQDSEHSVTIKAKKVSWSMGSSFPLKKATKGLPKIQIDDDSELIDEDSLLTEDDLKKPELPVVGDCEVGATRKACKNCTCGRAEAEEKVEKLNLTSEQINNPQSACGNCGLGDAFRCGTCPYRGLPAFKPGEKIALPGNFLAADL.

Positions 1–142 (MAATAAALAV…KVSWSMGSSF (142 aa)) are N-terminal SAM-like domain. The segment at 143–174 (PLKKATKGLPKIQIDDDSELIDEDSLLTEDDL) is linker. Residues Cys185, Cys194, Cys197, and Cys199 each contribute to the [2Fe-2S] cluster site. A fe-S binding site A region spans residues 185–199 (CEVGATRKACKNCTC). [4Fe-4S] cluster is bound by residues Cys225, Cys228, Cys236, and Cys239. Short sequence motifs (cx2C motif) lie at residues 225 to 228 (CGNC) and 236 to 239 (CGTC). Residues 225-239 (CGNCGLGDAFRCGTC) form a fe-S binding site B region.

Belongs to the anamorsin family. In terms of assembly, monomer. [2Fe-2S] cluster serves as cofactor. [4Fe-4S] cluster is required as a cofactor.

The protein resides in the cytoplasm. It is found in the mitochondrion intermembrane space. Functionally, component of the cytosolic iron-sulfur (Fe-S) protein assembly (CIA) machinery. Required for the maturation of extramitochondrial Fe-S proteins. Part of an electron transfer chain functioning in an early step of cytosolic Fe-S biogenesis, facilitating the de novo assembly of a [4Fe-4S] cluster on the cytosolic Fe-S scaffold complex. Electrons are transferred from NADPH via a FAD- and FMN-containing diflavin oxidoreductase. Together with the diflavin oxidoreductase, also required for the assembly of the diferric tyrosyl radical cofactor of ribonucleotide reductase (RNR), probably by providing electrons for reduction during radical cofactor maturation in the catalytic small subunit. The polypeptide is Anamorsin homolog 2 (Oryza sativa subsp. japonica (Rice)).